The chain runs to 340 residues: E3 ubiquitin ligase BIG BROTHER-related (340 aa).

Disordered stretches follow at residues 1 to 56 and 133 to 182; these read MPME…GVGE and YDED…GNSD. Residues 34-46 show a composition bias toward polar residues; it reads NRQTGVVSDTGSG. 2 stretches are compositionally biased toward acidic residues: residues 133–164 and 173–182; these read YDEDEFDDPENEDEDDDEDEYETDDDPQEDGL and DDQEDDGNSD. The RING-type; atypical zinc-finger motif lies at 288-329; that stretch reads CVICRLDYEDDEDLILLPCKHSYHSECINNWLKINKVCPVCS.

In terms of processing, auto-ubiquitinated.

The enzyme catalyses S-ubiquitinyl-[E2 ubiquitin-conjugating enzyme]-L-cysteine + [acceptor protein]-L-lysine = [E2 ubiquitin-conjugating enzyme]-L-cysteine + N(6)-ubiquitinyl-[acceptor protein]-L-lysine.. It functions in the pathway protein modification; protein ubiquitination. In terms of biological role, E3 ubiquitin-ligase probably involved in organ size regulation. This chain is E3 ubiquitin ligase BIG BROTHER-related (BBR), found in Arabidopsis thaliana (Mouse-ear cress).